Here is a 445-residue protein sequence, read N- to C-terminus: Phosphoglucosamine mutase (445 aa).

Ser-101 (phosphoserine intermediate) is an active-site residue. The Mg(2+) site is built by Ser-101, Asp-240, Asp-242, and Asp-244. Ser-101 carries the post-translational modification Phosphoserine.

The protein belongs to the phosphohexose mutase family. It depends on Mg(2+) as a cofactor. In terms of processing, activated by phosphorylation.

It catalyses the reaction alpha-D-glucosamine 1-phosphate = D-glucosamine 6-phosphate. Its function is as follows. Catalyzes the conversion of glucosamine-6-phosphate to glucosamine-1-phosphate. This chain is Phosphoglucosamine mutase, found in Pseudomonas aeruginosa (strain LESB58).